Here is a 353-residue protein sequence, read N- to C-terminus: Putative ABC transporter ATP-binding protein MG303 homolog (353 aa).

Residues 72–312 (LYFYNLSVFV…MQLLQRYEIT (241 aa)) form the ABC transporter domain. 107–114 (GPSGSGKT) contacts ATP.

Belongs to the ABC transporter superfamily.

The protein is Putative ABC transporter ATP-binding protein MG303 homolog of Mycoplasma pneumoniae (strain ATCC 29342 / M129 / Subtype 1) (Mycoplasmoides pneumoniae).